The sequence spans 707 residues: Glucose starvation modulator protein 1 (707 aa).

Positions 20 to 48 form a DNA-binding region, zn(2)-C6 fungal-type; it reads CTFCHQKHLQCSNERPCKNCVKRNIADQC. Disordered regions lie at residues 63-122, 154-188, 260-283, and 385-404; these read NSKA…PNDL, QPTH…PPES, DQQQ…GPSH, and NVSS…SAIA. Composition is skewed to low complexity over residues 66-79 and 91-104; these read AVAA…TTTT and SPSI…ISPI. Composition is skewed to polar residues over residues 105–114 and 154–172; these read NTSTFDTNGH and QPTH…QVQP. Low complexity predominate over residues 178–188; the sequence is SSVPPSAPPES. Over residues 260-274 the composition is skewed to polar residues; that stretch reads DQQQSSSEATGTSAS. The PAS domain maps to 522-591; that stretch reads DYEKLSQLNS…FQLFKSVAVG (70 aa). Residues 621–652 are compositionally biased toward low complexity; sequence NYNNNYNHNYSHNNNNNNNSNNSNNNGMSTGA. The segment at 621 to 659 is disordered; sequence NYNNNYNHNYSHNNNNNNNSNNSNNNGMSTGAGNSGDGD.

This sequence belongs to the ERT1/acuK family.

It localises to the nucleus. Functionally, transcription factor which regulates nonfermentable carbon utilization. This is Glucose starvation modulator protein 1 (GSM1) from Lodderomyces elongisporus (strain ATCC 11503 / CBS 2605 / JCM 1781 / NBRC 1676 / NRRL YB-4239) (Yeast).